The primary structure comprises 383 residues: Aquaporin-5 (383 aa).

Residues 1–46 are Cytoplasmic-facing; it reads MSVTTLNGQPTLNISGPGQTALSRLDPLKKVFTKFFSSIPQKVRGH. Residues 47–67 traverse the membrane as a helical segment; it reads VVAVIGELIGTTAFLFIAFSA. At 68-93 the chain is on the extracellular side; that stretch reads AEVALASANDNKGDKVSYETKSISTT. The helical transmembrane segment at 94 to 114 threads the bilayer; sequence QILFIAFGAGISLVVNAWTFF. Residue Arg115 is a topological domain, cytoplasmic. A helical membrane pass occupies residues 116–136; that stretch reads ISGGLFDPAVSIALFFVGAID. Residues 122–124 carry the NPA 1 motif; that stretch reads DPA. At 137-140 the chain is on the extracellular side; that stretch reads LTRC. A helical membrane pass occupies residues 141 to 161; the sequence is VLLCIAQCLGAIAASAMAYGL. Over 162 to 180 the chain is Cytoplasmic; that stretch reads YHGGLHTATTLKPGMSPAQ. The helical transmembrane segment at 181–201 threads the bilayer; it reads GVIVEMILTCQLCFTVLMLAA. Over 202 to 207 the chain is Extracellular; that stretch reads EKHEAT. Residues 208–228 traverse the membrane as a helical segment; that stretch reads FLAPLGIGLSVFIGELAGVFW. Residues 229–252 are Cytoplasmic-facing; that stretch reads TGGSMNPARSLGPAVVTLSFPSYH. Positions 234 to 236 match the NPA 2 motif; the sequence is NPA. The chain crosses the membrane as a helical span at residues 253 to 273; sequence WIYWVGPIAGAGLASIIYKLI. Topologically, residues 274-383 are extracellular; sequence KALEYETAQL…DGFFGEMYAD (110 aa). Positions 332–349 are enriched in polar residues; that stretch reads ARKSSSLVPTKSTKSGNS. The disordered stretch occupies residues 332–383; sequence ARKSSSLVPTKSTKSGNSEVKKTETVVEEPAKTQPKPAPAADDGFFGEMYAD. The span at 350–362 shows a compositional bias: basic and acidic residues; that stretch reads EVKKTETVVEEPA. Over residues 363-372 the composition is skewed to low complexity; sequence KTQPKPAPAA.

It belongs to the MIP/aquaporin (TC 1.A.8) family.

The protein localises to the membrane. It carries out the reaction H2O(in) = H2O(out). Its function is as follows. Water channel required to facilitate the transport of water across membranes. May play a role in the vegetative growth. The sequence is that of Aquaporin-5 from Botryotinia fuckeliana (strain B05.10) (Noble rot fungus).